The following is a 37-amino-acid chain: Large ribosomal subunit protein bL36 (37 aa).

Belongs to the bacterial ribosomal protein bL36 family.

This chain is Large ribosomal subunit protein bL36, found in Mesomycoplasma hyopneumoniae (strain 7448) (Mycoplasma hyopneumoniae).